Consider the following 340-residue polypeptide: Guanine nucleotide-binding protein subunit beta-4 (340 aa).

Ser2 carries the N-acetylserine modification. Ser2 is modified (phosphoserine). WD repeat units lie at residues 53 to 92 (GHLAKIYAMHWGYDSRLLVSASQDGKLIIWDSYTTNKMHA), 95 to 134 (LRSSWVMTCAYAPSGNYVACGGLDNICSIYNLKTREGNVR), 141 to 179 (GHTGYLSCCRFLDDSQIVTSSGDTTCALWDIETAQQTTT), 182 to 221 (GHSGDVMSLSLSPDMRTFVSGACDASSKLWDIRDGMCRQS), and 224 to 263 (GHVSDINAVSFFPNGYAFATGSDDATCRLFDLRADQELLL). Position 266 is a phosphohistidine (His266). WD repeat units lie at residues 268–307 (NIICGITSVAFSKSGRLLLAGYDDFNCNVWDTLKGDRAGV) and 310–339 (GHDNRVSCLGVTDDGMAVATGSWDSFLRIW).

This sequence belongs to the WD repeat G protein beta family. As to quaternary structure, g proteins are composed of 3 units, alpha, beta and gamma. As to expression, strongly expressed in lung and placenta, whereas it is weakly expressed in brain and heart. Abundantly expressed in the axons and Schwann cells of peripheral nerves.

In terms of biological role, guanine nucleotide-binding proteins (G proteins) are involved as a modulator or transducer in various transmembrane signaling systems. The beta and gamma chains are required for the GTPase activity, for replacement of GDP by GTP, and for G protein-effector interaction. This chain is Guanine nucleotide-binding protein subunit beta-4 (GNB4), found in Homo sapiens (Human).